The chain runs to 527 residues: Hopanoid C-2 methylase (527 aa).

The B12-binding domain maps to 36-148 (VAAFMPPQGL…AKLTHDVTRP (113 aa)). One can recognise a Radical SAM core domain in the interval 173–408 (AECSKYLLGS…HDQVVAMWKD (236 aa)). 3 residues coordinate [4Fe-4S] cluster: Cys189, Cys193, and Cys196.

Belongs to the radical SAM superfamily. It depends on [4Fe-4S] cluster as a cofactor.

Functionally, required for methylation of hopanoids at the C-2 position. The sequence is that of Hopanoid C-2 methylase from Rhodopseudomonas palustris (strain TIE-1).